The sequence spans 209 residues: Kunitz trypsin inhibitor 1 (209 aa).

The signal sequence occupies residues 1-22 (MKATISITTIFLVVALAAPSLA). 2 disulfide bridges follow: cysteine 63–cysteine 107 and cysteine 154–cysteine 162. The N-linked (GlcNAc...) asparagine glycan is linked to asparagine 156.

This sequence belongs to the protease inhibitor I3 (leguminous Kunitz-type inhibitor) family.

Functionally, exhibits Kunitz trypsin protease inhibitor activity. In Arabidopsis thaliana (Mouse-ear cress), this protein is Kunitz trypsin inhibitor 1.